The chain runs to 182 residues: MVASIAGEEEPAAEKSQQSPDHFQPYRPYYYPPYRGYPITYPYPYPHGYPKPYHNFQTIAKPNEGPTDQPEANSANSIEEGGVSKRLFIEPIFNLFRPRPRDPIVVNQAPPPPPVIYQAPPPPPPPPIFQQAPPTIYQQPSPTIIQQAPQPSVTKLVYSQPEPSHSVIYQTQPKTELVYLNQ.

The first 7 residues, 1–7, serve as a signal peptide directing secretion; sequence MVASIAG. Disordered regions lie at residues 1–26, 56–79, and 104–136; these read MVASIAGEEEPAAEKSQQSPDHFQPY, FQTIAKPNEGPTDQPEANSANSIE, and IVVNQAPPPPPVIYQAPPPPPPPPIFQQAPPTI. Pro residues predominate over residues 109–128; that stretch reads APPPPPVIYQAPPPPPPPPI.

As to expression, spermatophore.

Its subcellular location is the secreted. Functionally, structural protein of a layer within the wall of the spermatophore produced probably by cell type 4 of the bean-shaped gland (BAG). Fixation in the spermatophore seems to require covalent cross-linking of spermatophorins. The sequence is that of Spermatophorin SP23 (SP23) from Tenebrio molitor (Yellow mealworm beetle).